The chain runs to 124 residues: Small ribosomal subunit protein uS12 (124 aa).

The segment covering 11–20 (GRKRLKKKSK) has biased composition (basic residues). Residues 11–30 (GRKRLKKKSKSPALENNPQK) form a disordered region. 3-methylthioaspartic acid is present on Asp89. Positions 105–124 (EGVANRRQSRSRYGAKKPKK) are disordered. The segment covering 111 to 124 (RQSRSRYGAKKPKK) has biased composition (basic residues).

This sequence belongs to the universal ribosomal protein uS12 family. Part of the 30S ribosomal subunit. Contacts proteins S8 and S17. May interact with IF1 in the 30S initiation complex.

Its function is as follows. With S4 and S5 plays an important role in translational accuracy. Functionally, interacts with and stabilizes bases of the 16S rRNA that are involved in tRNA selection in the A site and with the mRNA backbone. Located at the interface of the 30S and 50S subunits, it traverses the body of the 30S subunit contacting proteins on the other side and probably holding the rRNA structure together. The combined cluster of proteins S8, S12 and S17 appears to hold together the shoulder and platform of the 30S subunit. This chain is Small ribosomal subunit protein uS12, found in Kosmotoga olearia (strain ATCC BAA-1733 / DSM 21960 / TBF 19.5.1).